We begin with the raw amino-acid sequence, 202 residues long: Translation initiation factor 2 subunit beta (202 aa).

The 58-residue stretch at 145–202 folds into the TRAM domain; that stretch reads AIEEGGTYELRIDAVGSKGDGIAKIDKYTVFVPGATKGDVVKVKIKKISGNLAFSERA.

Belongs to the eIF-2-beta/eIF-5 family. As to quaternary structure, heterotrimer composed of an alpha, a beta and a gamma chain.

Functionally, eIF-2 functions in the early steps of protein synthesis by forming a ternary complex with GTP and initiator tRNA. The chain is Translation initiation factor 2 subunit beta (eif2b) from Methanosarcina mazei (strain ATCC BAA-159 / DSM 3647 / Goe1 / Go1 / JCM 11833 / OCM 88) (Methanosarcina frisia).